Here is a 413-residue protein sequence, read N- to C-terminus: MTQDIIDNIAAEGISYYTPAQVPPAGTQVEGSTKLFSPLTIRGVTFPNRLFLAPLCQYSAKDGYANDWHLTHIGGIVQRGPGLAIMEATAVQKVGRITPQDLGLYDDGHIEPLKRITEFAHSQSQKIGIQLAHAGRKASAVAPWLSGNAMAVKEVGGWPDDIVAPSAIPQEEGINAVPKVLTGEDIGVLKKDWAEAAKRAVRANFDAIEIHAAHGYLLHQFLSPVSNRRTDKYGGSFENRVRILLEICEEVRAVIPTAMPLLVRISATDWFEFDDNLTKEFPESWTVAQSIRLALLLADRGVDLVDVSSGGIHAKSAIAIRSGPGYQVHFAQEIKKAVGEKLLISAVGGIKTGALAEEVVQSGIDAVQAGRWFQQNPGLVRAFANELGVKVRMATQIDWSFEGRGKKAKKSSL.

A53 to C56 is a binding site for FMN. Y58 serves as a coordination point for substrate. Residues A88 and Q130 each coordinate FMN. H211–H214 is a substrate binding site. Residues R264 and G370 to R371 contribute to the FMN site.

It belongs to the NADH:flavin oxidoreductase/NADH oxidase family. NamA subfamily. FMN is required as a cofactor.

It catalyses the reaction A + NADPH + H(+) = AH2 + NADP(+). It participates in secondary metabolite biosynthesis. NADPH dehydrogenase; part of the gene cluster that mediates the biosynthesis of aflavarin, a bicoumarin that exhibits anti-insectan activity against the fungivorous beetle C.hemipterus. The sequence is that of NADPH dehydrogenase afvA from Aspergillus flavus (strain ATCC 200026 / FGSC A1120 / IAM 13836 / NRRL 3357 / JCM 12722 / SRRC 167).